A 58-amino-acid chain; its full sequence is Small ribosomal subunit protein bS21 (58 aa).

The interval 39 to 58 (DKPSVKKRAKSKAAAKYRSR) is disordered. Positions 43 to 58 (VKKRAKSKAAAKYRSR) are enriched in basic residues.

Belongs to the bacterial ribosomal protein bS21 family.

The sequence is that of Small ribosomal subunit protein bS21 (rpsU) from Chlamydia pneumoniae (Chlamydophila pneumoniae).